The sequence spans 611 residues: Chaperone protein DnaK (611 aa).

A Phosphothreonine; by autocatalysis modification is found at threonine 173. 2 disordered regions span residues 525–548 (DNIS…ALEG) and 573–611 (YQQA…EDKK). Residues 529–542 (EEDKSNAESKKDAL) are compositionally biased toward basic and acidic residues. The span at 574–591 (QQAQQAQQQAQDGAQQTQ) shows a compositional bias: low complexity. Basic and acidic residues predominate over residues 599–611 (AEFKEVNDDEDKK).

This sequence belongs to the heat shock protein 70 family.

Its function is as follows. Acts as a chaperone. This is Chaperone protein DnaK from Staphylococcus haemolyticus (strain JCSC1435).